A 279-amino-acid polypeptide reads, in one-letter code: Tryptophan 2,3-dioxygenase (279 aa).

Substrate-binding positions include 48–52 (FIVIH), Tyr-110, and Arg-114. His-237 is a heme binding site. Thr-251 lines the substrate pocket.

The protein belongs to the tryptophan 2,3-dioxygenase family. Homotetramer. Heme serves as cofactor.

The enzyme catalyses L-tryptophan + O2 = N-formyl-L-kynurenine. It functions in the pathway amino-acid degradation; L-tryptophan degradation via kynurenine pathway; L-kynurenine from L-tryptophan: step 1/2. Heme-dependent dioxygenase that catalyzes the oxidative cleavage of the L-tryptophan (L-Trp) pyrrole ring and converts L-tryptophan to N-formyl-L-kynurenine. Catalyzes the oxidative cleavage of the indole moiety. The chain is Tryptophan 2,3-dioxygenase from Bacillus thuringiensis (strain Al Hakam).